Here is a 1041-residue protein sequence, read N- to C-terminus: Collagen alpha-2(I) chain (1041 aa).

The segment at 1–1041 (SGGFDFSFLP…FGYEGDFYRA (1041 aa)) is disordered. Residues Pro-10, Pro-13, Pro-39, and Pro-45 each carry the 4-hydroxyproline modification. Low complexity-rich tracts occupy residues 25–45 (LGPGPMGLMGPRGPPGASGAP) and 55–76 (EPGEPGQTGPAGARGPAGPPGK). Positions 77-91 (AGEDGHPGKPGRPGE) are enriched in basic and acidic residues. The residue at position 113 (Lys-113) is a 5-hydroxylysine; alternate. Lys-113 carries O-linked (Gal...) hydroxylysine; alternate glycosylation. Low complexity-rich tracts occupy residues 174 to 189 (SVGPVGPAGPIGSAGP) and 235 to 256 (PGANGLTGAKGAAGLPGVAGAP). The span at 290 to 299 (GESGGKGEPG) shows a compositional bias: gly residues. Residues 300-310 (SAGPQGPPGSS) show a composition bias toward low complexity. The segment covering 332 to 341 (GLRGGPGSRG) has biased composition (gly residues). Over residues 354–370 (PAGARGASGPAGVRGPS) the composition is skewed to low complexity. Residues Pro-376 and Pro-379 each carry the 4-hydroxyproline modification. Low complexity predominate over residues 405-424 (LPGIDGRPGPIGPAGARGEA). The segment covering 466 to 475 (GVQGGKGEQG) has biased composition (gly residues). 2 stretches are compositionally biased toward low complexity: residues 522-539 (SGESGAVGPSGAIGSRGP) and 551-561 (EPGVVGAPGTA). The segment covering 562–571 (GPAGSGGLPG) has biased composition (gly residues). 2 stretches are compositionally biased toward low complexity: residues 594–638 (VGTT…PRGS) and 645–665 (VGPAGPNGFAGPAGAAGQPGA). Residues 666–675 (KGERGTKGPK) show a composition bias toward basic and acidic residues. Over residues 683-693 (PTGPVGSAGPA) the composition is skewed to low complexity. Over residues 703-712 (GSRGDGGPPG) the composition is skewed to gly residues. A compositionally biased stretch (low complexity) spans 714-723 (TGFPGAAGRT). The span at 754–768 (GPVGRGETGAGGPPG) shows a compositional bias: gly residues. 2 stretches are compositionally biased toward low complexity: residues 769–803 (FTGEKGPSGEPGTAGPPGTAGPQGLLGAPGILGLP) and 811–821 (LPGVAGAVGEP). Over residues 822 to 840 (GPLGIGPPGARGPSGGVPG) the composition is skewed to gly residues. Composition is skewed to low complexity over residues 874–887 (YAGNPGPVGAAGAP) and 903–918 (EPGPVGSAGPVGALGP). A compositionally biased stretch (basic and acidic residues) spans 928-939 (RGDKGEAGDKGP). Residues 1013-1023 (PAGPPGPPGPP) show a composition bias toward pro residues.

Belongs to the fibrillar collagen family. In terms of assembly, trimers of one alpha 2(I) and two alpha 1(I) chains. Interacts (via C-terminus) with TMEM131 (via PapD-L domain); the interaction is direct and is involved in assembly and TRAPPIII ER-to-Golgi transport complex-dependent secretion of collagen. In terms of processing, prolines at the third position of the tripeptide repeating unit (G-X-Y) are hydroxylated in some or all of the chains. As to expression, expressed in bones.

The protein localises to the secreted. It localises to the extracellular space. Its subcellular location is the extracellular matrix. In terms of biological role, type I collagen is a member of group I collagen (fibrillar forming collagen). The protein is Collagen alpha-2(I) chain of Paramylodon harlani (Harlan's ground sloth).